Reading from the N-terminus, the 234-residue chain is Thiamine-phosphate synthase (234 aa).

Residues 65–69 (QYRNK) and N97 each bind 4-amino-2-methyl-5-(diphosphooxymethyl)pyrimidine. Residues D98 and D117 each contribute to the Mg(2+) site. Residue S136 participates in 4-amino-2-methyl-5-(diphosphooxymethyl)pyrimidine binding. Residue 163 to 165 (SHT) coordinates 2-[(2R,5Z)-2-carboxy-4-methylthiazol-5(2H)-ylidene]ethyl phosphate. K166 lines the 4-amino-2-methyl-5-(diphosphooxymethyl)pyrimidine pocket. 2-[(2R,5Z)-2-carboxy-4-methylthiazol-5(2H)-ylidene]ethyl phosphate-binding positions include G192 and 212 to 213 (IS).

The protein belongs to the thiamine-phosphate synthase family. It depends on Mg(2+) as a cofactor.

It carries out the reaction 2-[(2R,5Z)-2-carboxy-4-methylthiazol-5(2H)-ylidene]ethyl phosphate + 4-amino-2-methyl-5-(diphosphooxymethyl)pyrimidine + 2 H(+) = thiamine phosphate + CO2 + diphosphate. The enzyme catalyses 2-(2-carboxy-4-methylthiazol-5-yl)ethyl phosphate + 4-amino-2-methyl-5-(diphosphooxymethyl)pyrimidine + 2 H(+) = thiamine phosphate + CO2 + diphosphate. The catalysed reaction is 4-methyl-5-(2-phosphooxyethyl)-thiazole + 4-amino-2-methyl-5-(diphosphooxymethyl)pyrimidine + H(+) = thiamine phosphate + diphosphate. The protein operates within cofactor biosynthesis; thiamine diphosphate biosynthesis; thiamine phosphate from 4-amino-2-methyl-5-diphosphomethylpyrimidine and 4-methyl-5-(2-phosphoethyl)-thiazole: step 1/1. In terms of biological role, condenses 4-methyl-5-(beta-hydroxyethyl)thiazole monophosphate (THZ-P) and 2-methyl-4-amino-5-hydroxymethyl pyrimidine pyrophosphate (HMP-PP) to form thiamine monophosphate (TMP). This Xylella fastidiosa (strain Temecula1 / ATCC 700964) protein is Thiamine-phosphate synthase.